We begin with the raw amino-acid sequence, 573 residues long: Solute carrier family 41 member 2 (573 aa).

Over 1 to 162 the chain is Extracellular; the sequence is MTNSKGRSIT…KESSGIMALQ (162 aa). A phosphoserine mark is found at S136 and S137. The helical transmembrane segment at 163–183 threads the bilayer; it reads ILVPFLLAGFGTVSAGMVLDI. Residues 184-195 are Cytoplasmic-facing; sequence VQHWEVFRKVTE. The helical transmembrane segment at 196-216 threads the bilayer; the sequence is VFILVPALLGLKGNLEMTLAS. At 217–245 the chain is on the extracellular side; the sequence is RLSTAVNIGKMDSPIEKWNLIIGNLALKQ. The helical transmembrane segment at 246–266 threads the bilayer; the sequence is VQATVVGFLAAVAAIILGWIP. Over 267 to 282 the chain is Cytoplasmic; that stretch reads EGKYYLDHSILLCSSS. Residues 283 to 303 form a helical membrane-spanning segment; that stretch reads VATAFIASLLQGIIMVGVIVG. Residues 304–313 are Extracellular-facing; it reads SKKTGINPDN. The chain crosses the membrane as a helical span at residues 314–334; that stretch reads VATPIAASFGDLITLAILAWI. Over 335-347 the chain is Cytoplasmic; the sequence is SQGLYSCLETYYY. Residues 348–368 traverse the membrane as a helical segment; it reads ISPLVGVFFLALTPIWIIIAA. The Extracellular segment spans residues 369–376; it reads KHPATRTV. A helical membrane pass occupies residues 377–397; sequence LHSGWEPVITAMVISSIGGLI. The Cytoplasmic portion of the chain corresponds to 398-406; sequence LDTTVSDPN. Residues 407-427 traverse the membrane as a helical segment; sequence LVGIVVYTPVINGIGGNLVAI. Over 428-469 the chain is Extracellular; the sequence is QASRISTYLHLHSIPGELPDEPKGCYYPFRTFFGPGVNNKSA. The helical transmembrane segment at 470–490 threads the bilayer; the sequence is QVLLLLVIPGHLIFLYTIHLM. The Cytoplasmic segment spans residues 491–498; sequence KSGHTSLT. A helical membrane pass occupies residues 499–519; the sequence is IIFIVVYLFAAVLQVFTLLWI. The Extracellular portion of the chain corresponds to 520–543; it reads ADWMVHHFWRKGKDPDSFSIPYLT. The chain crosses the membrane as a helical span at residues 544-564; it reads ALGDLLGTALLALSFHFLWLI. At 565 to 573 the chain is on the cytoplasmic side; it reads GDRDGDVGD.

It belongs to the SLC41A transporter family.

It is found in the cell membrane. The catalysed reaction is Mg(2+)(in) = Mg(2+)(out). The enzyme catalyses Mn(2+)(in) = Mn(2+)(out). It carries out the reaction Co(2+)(in) = Co(2+)(out). It catalyses the reaction Ni(2+)(in) = Ni(2+)(out). The catalysed reaction is Fe(2+)(in) = Fe(2+)(out). Its function is as follows. Acts as a plasma-membrane magnesium transporter. Can also mediate the transport of other divalent metal cations in an order of Ba(2+) &gt; Ni(2+) &gt; Co(2+) &gt; Fe(2+) &gt; Mn(2+). This chain is Solute carrier family 41 member 2 (SLC41A2), found in Macaca fascicularis (Crab-eating macaque).